Here is a 53-residue protein sequence, read N- to C-terminus: Large ribosomal subunit protein eL24 (53 aa).

4 residues coordinate Zn(2+): cysteine 4, cysteine 7, cysteine 30, and cysteine 34. A C4-type zinc finger spans residues 4–34 (CSFCNKEIEEGTGKMYVKKDGSIYFFCSSKC).

It belongs to the eukaryotic ribosomal protein eL24 family. In terms of assembly, part of the 50S ribosomal subunit. Forms a cluster with proteins L3 and L14. Requires Zn(2+) as cofactor.

Its function is as follows. Binds to the 23S rRNA. The polypeptide is Large ribosomal subunit protein eL24 (Methanobrevibacter smithii (strain ATCC 35061 / DSM 861 / OCM 144 / PS)).